We begin with the raw amino-acid sequence, 331 residues long: Glucokinase (331 aa).

An ATP-binding site is contributed by 14–19 (GDIGGT).

It belongs to the bacterial glucokinase family.

The protein resides in the cytoplasm. It catalyses the reaction D-glucose + ATP = D-glucose 6-phosphate + ADP + H(+). The polypeptide is Glucokinase (Aromatoleum aromaticum (strain DSM 19018 / LMG 30748 / EbN1) (Azoarcus sp. (strain EbN1))).